The primary structure comprises 71 residues: Ubiquinol-cytochrome c reductase complex assembly factor 6 (71 aa).

The Mitochondrial matrix segment spans residues 1–8; the sequence is MPAGVPMS. A helical; Signal-anchor for type II membrane protein transmembrane segment spans residues 9–25; the sequence is TYLKMFAASLLAMCAGA. The Mitochondrial intermembrane segment spans residues 26–71; the sequence is EVVHRYYRPDLTIPEIPPKRGELKTELLGLKERKHKPQVSQQEELK.

It belongs to the UQCC6 family. Interacts with UQCRC1. Interacts with UQCRQ. Interacts with UQCC5. Forms a complex, named COMB/coordinator of mitochondrial CYTB biogenesis, composed of UQCC1, UQCC2, UQCC4, UQCC5 and UQCC6; stabilizes nascent cytochrome b/MT-CYB and promotes its membrane insertion. Forms a complex, named COMA, composed of UQCC1, UQCC2 and UQCC4; activates MT-CYB translation. Forms a complex, named COMC, composed of UQCC1, UQCC2; UQCC3 and UQCC4; mediates MT-CYB hemylation and association with the first nuclear-encoded complex III subunit UQCRQ. Interacts with MT-CYB. As to expression, cardiac and skeletal muscle (at protein level).

It localises to the mitochondrion inner membrane. Its function is as follows. Required for the assembly and stability of the mitochondrial ubiquinol-cytochrome c reductase complex (complex III (CIII) or cytochrome b-c1 complex), a multisubunit transmembrane complex that is part of the mitochondrial electron transport chain (ETC) which drives oxidative phosphorylation. Mediates early complex III biogenesis. Participates in regulating the levels of electron transport chain proteins, and therefore energy supply, in response to changes in energy demand. Also required for cytochrome c oxidase complex (complex IV) assembly. The sequence is that of Ubiquinol-cytochrome c reductase complex assembly factor 6 from Homo sapiens (Human).